Here is a 384-residue protein sequence, read N- to C-terminus: MSKSALLVLEDGTVFRGISIGADGSAIGEVVFNTSMTGYQEILTDPSYSQQIVTLTYPHIGNTGTNSEDEESNSIHAQGLVIRDLPLLASNFRNERSLSDYLKSQNIVGIAEIDTRKLTRILREKGAQNGCIMAGDNLDEALALDKAKEFPGLKGMDLAKVVTTAETYQWKQGSWTLLDGLPEAKDDSELPYHVVAYDFGAKRNILRMLVDRGCRLTVVPAQTSAEDVLAMNPDGVFLSNGPGDPEPCTYAIEATKTFLDIGLPIFGICLGHQILALASGAKTVKMKFGHHGANHPVKDIDRDVVMITSQNHGFAADEATLPDTLRATHKSLFDGSLQGIHRTDKPAFSFQGHPEASPGPTDAAPLFDHFIELIKLSVNEARSA.

The CPSase stretch occupies residues 1–189; that stretch reads MSKSALLVLE…GLPEAKDDSE (189 aa). Positions 47, 241, and 243 each coordinate L-glutamine. One can recognise a Glutamine amidotransferase type-1 domain in the interval 193-380; it reads HVVAYDFGAK…IELIKLSVNE (188 aa). C269 serves as the catalytic Nucleophile. L-glutamine is bound by residues L270, Q273, N311, G313, and F314. Active-site residues include H353 and E355.

It belongs to the CarA family. Composed of two chains; the small (or glutamine) chain promotes the hydrolysis of glutamine to ammonia, which is used by the large (or ammonia) chain to synthesize carbamoyl phosphate. Tetramer of heterodimers (alpha,beta)4.

The enzyme catalyses hydrogencarbonate + L-glutamine + 2 ATP + H2O = carbamoyl phosphate + L-glutamate + 2 ADP + phosphate + 2 H(+). It carries out the reaction L-glutamine + H2O = L-glutamate + NH4(+). It functions in the pathway amino-acid biosynthesis; L-arginine biosynthesis; carbamoyl phosphate from bicarbonate: step 1/1. It participates in pyrimidine metabolism; UMP biosynthesis via de novo pathway; (S)-dihydroorotate from bicarbonate: step 1/3. Functionally, small subunit of the glutamine-dependent carbamoyl phosphate synthetase (CPSase). CPSase catalyzes the formation of carbamoyl phosphate from the ammonia moiety of glutamine, carbonate, and phosphate donated by ATP, constituting the first step of 2 biosynthetic pathways, one leading to arginine and/or urea and the other to pyrimidine nucleotides. The small subunit (glutamine amidotransferase) binds and cleaves glutamine to supply the large subunit with the substrate ammonia. The polypeptide is Carbamoyl phosphate synthase small chain (Photobacterium profundum (strain SS9)).